A 231-amino-acid polypeptide reads, in one-letter code: NADH-ubiquinone oxidoreductase chain 4 (231 aa).

7 helical membrane passes run 1 to 21 (PIAG…YGII), 34 to 54 (VFLP…LTCL), 61 to 80 (SLIA…AIII), 84 to 106 (WGLS…LFCL), 128 to 148 (ILPM…ATPP), 156 to 176 (LLII…LGLS), and 211 to 231 (LLMI…ELVI).

Belongs to the complex I subunit 4 family.

The protein localises to the mitochondrion membrane. It catalyses the reaction a ubiquinone + NADH + 5 H(+)(in) = a ubiquinol + NAD(+) + 4 H(+)(out). Its function is as follows. Core subunit of the mitochondrial membrane respiratory chain NADH dehydrogenase (Complex I) that is believed to belong to the minimal assembly required for catalysis. Complex I functions in the transfer of electrons from NADH to the respiratory chain. The immediate electron acceptor for the enzyme is believed to be ubiquinone. The polypeptide is NADH-ubiquinone oxidoreductase chain 4 (MT-ND4) (Tropidolaemus wagleri (Wagler's pit viper)).